A 186-amino-acid chain; its full sequence is Golgi apparatus membrane protein-like protein ECHIDNA (186 aa).

N-acetylmethionine is present on methionine 1. 3 helical membrane-spanning segments follow: residues 35–55 (ILSALFFNSFVIIFVVTVLLA), 108–128 (FWWTLYLAAAAWFILGVFSLI), and 132–152 (ADYLLVVGVCLSLNVANIIGF).

This sequence belongs to the TVP23 family. In terms of assembly, component of a trans-Golgi network (TGN)-localized ECH/YIP4 complex made of ECH, YIP4A and YIP4B. Interacts directly with YIP4A and YIP4B.

It is found in the golgi apparatus. The protein resides in the trans-Golgi network membrane. Its subcellular location is the early endosome membrane. Functionally, mediates trans-Golgi-network trafficking and cell elongation. Required for keeping the appropriate balance between secretory trafficking and vacuolar targeting of a subset of proteins. The ECH/YIP4 complex is involved in the modulation of the trans-Golgi network (TGN)-mediated trafficking of some proteins and cell wall components (e.g. pectin and hemicellulose) to the cell wall in dark-grown hypocotyls and in secretory cells of the seed coat. The sequence is that of Golgi apparatus membrane protein-like protein ECHIDNA from Arabidopsis thaliana (Mouse-ear cress).